Here is a 500-residue protein sequence, read N- to C-terminus: Lysine--tRNA ligase (500 aa).

Positions 411 and 418 each coordinate Mg(2+).

Belongs to the class-II aminoacyl-tRNA synthetase family. Homodimer. Requires Mg(2+) as cofactor.

It is found in the cytoplasm. It carries out the reaction tRNA(Lys) + L-lysine + ATP = L-lysyl-tRNA(Lys) + AMP + diphosphate. In Actinobacillus pleuropneumoniae serotype 7 (strain AP76), this protein is Lysine--tRNA ligase.